The chain runs to 231 residues: Large ribosomal subunit protein uL1 (231 aa).

This sequence belongs to the universal ribosomal protein uL1 family. As to quaternary structure, part of the 50S ribosomal subunit.

Functionally, binds directly to 23S rRNA. The L1 stalk is quite mobile in the ribosome, and is involved in E site tRNA release. In terms of biological role, protein L1 is also a translational repressor protein, it controls the translation of the L11 operon by binding to its mRNA. This is Large ribosomal subunit protein uL1 from Herminiimonas arsenicoxydans.